The sequence spans 2515 residues: Nonribosomal peptide synthetase tpzA (2515 aa).

The segment at 246 to 648 (ELATRQPGAQ…GRMGTQVKLR (403 aa)) is adenylation 1. One can recognise a Carrier 1 domain in the interval 794–867 (SEVEHLIHAI…DMATVALKTS (74 aa)). Ser-828 bears the O-(pantetheine 4'-phosphoryl)serine mark. The segment at 924–1332 (DAYPCSPLQE…IRSVPHITPE (409 aa)) is condensation 1. Positions 1357-1758 (RKQSQETPSA…GRMNDQIKLR (402 aa)) are adenylation 2. The Carrier 2 domain maps to 1900–1976 (LATTNEERTL…AILSHLTGRK (77 aa)). Ser-1937 is subject to O-(pantetheine 4'-phosphoryl)serine. The segment at 2013 to 2431 (VEDIYPCGPI…LGILPPEEQK (419 aa)) is condensation 2. The Carrier 3 domain occupies 2436-2512 (PSLSAAVVRL…AMARRSLVVS (77 aa)). At Ser-2473 the chain carries O-(pantetheine 4'-phosphoryl)serine.

This sequence belongs to the NRP synthetase family.

Its pathway is secondary metabolite biosynthesis. In terms of biological role, nonribosomal peptide synthetase; part of the gene cluster that mediates the biosynthesis of terreazepine,. The first step of terreazepine biosynthesis is catalyzed by the indoleamine 2,3-dioxygenase tpzB which produces N-formyl-kynurenine through the catabolism of tryptophan. The two-module NRPS tpzA then utilizes anthranilate and kynurenine to assemble terreazepine. The first adenylation domain of tpzA (A1) loads anthranilate onto the T1 domain, while A2 loads kynurenine, generated through spontaneous nonenzymatic deformylation of the tzpB-supplied N-formyl-kynurenine. TpzA produces a 2:1 mixture of S-R enantiomers, which suggests that the A2 domain accepts both D- and L-kynurenine. The peptide bond formation between the tethered amino acids is catalyzed by the first condensation domain (C1) between anthranilate's carbonyl carbon and kynurenine's aliphatic primary amine. The second C domain (C2) catalyzes the final cyclization event between the aromatic amine of kynurenine and the tethered carbonyl carbon, yielding the final terreazepine product. The T3 domain may facilitate the interaction with downstream tailoring enzymes. This Aspergillus terreus (strain NIH 2624 / FGSC A1156) protein is Nonribosomal peptide synthetase tpzA.